Reading from the N-terminus, the 1582-residue chain is ATP-binding cassette sub-family C member 8 (1582 aa).

Residues 1-30 (MPLAFCGTENHSAAYRVDQGVLNNGCFVDA) lie on the Extracellular side of the membrane. C6 and C26 are disulfide-bonded. N10 is a glycosylation site (N-linked (GlcNAc...) asparagine). A helical membrane pass occupies residues 31-47 (LNVVPHVFLLFITFPIL). At 48-72 (FIGWGSQSSKVHIHHSTWLHFPGHN) the chain is on the cytoplasmic side. The helical transmembrane segment at 73–89 (LRWILTFILLFVLVCEI) threads the bilayer. Residues 90-106 (AEGILSDGVTESRHLHL) are Extracellular-facing. The chain crosses the membrane as a helical span at residues 107–123 (YMPAGMAFMAAITSVVY). The Cytoplasmic portion of the chain corresponds to 124–136 (YHNIETSNFPKLL). The helical transmembrane segment at 137-153 (IALLIYWTLAFITKTIK) threads the bilayer. Residues 154-169 (FVKFYDHAIGFSQLRF) lie on the Extracellular side of the membrane. The helical transmembrane segment at 170–186 (CLTGLLVILYGMLLLVE) threads the bilayer. The Cytoplasmic segment spans residues 187 to 303 (VNVIRVRRYI…AFGRRLILSS (117 aa)). The 304-residue stretch at 299 to 602 (LILSSTFRIL…LSSVVRSTVK (304 aa)) folds into the ABC transmembrane type-1 1 domain. The chain crosses the membrane as a helical span at residues 304–319 (TFRILADLLGFAGPLC). Residues 320–356 (IFGIVDHLGKENHVFQPKTQFLGVYFVSSQEFLGNAY) are Extracellular-facing. The helical transmembrane segment at 357-372 (VLAVLLFLALLLQRTF) threads the bilayer. Over 373–438 (LQASYYVAIE…MWFFFLCPNL (66 aa)) the chain is Cytoplasmic. Residues 439–454 (WTMPVQIIVGVILLYY) traverse the membrane as a helical segment. Topologically, residues 455 to 460 (ILGVSA) are extracellular. Residues 461–473 (LIGAAVIILLAPV) form a helical membrane-spanning segment. Residues 474 to 541 (QYFVATKLSQ…SLRAFAVYTS (68 aa)) lie on the Cytoplasmic side of the membrane. The chain crosses the membrane as a helical span at residues 542 to 557 (ISIFMNTAIPIAAVLI). Over 558-576 (TFVGHVSFFKESDLSPSVA) the chain is Extracellular. A helical transmembrane segment spans residues 577–592 (FASLSLFHILVTPLFL). Residues 593–1013 (LSSVVRSTVK…YLSSAGILLL (421 aa)) are Cytoplasmic-facing. The ABC transporter 1 domain occupies 679–930 (VQIIGGFFTW…ECQLFEHWKT (252 aa)). W688, G716, S720, and S721 together coordinate ATP. Position 720 (S720) interacts with Mg(2+). Positions 741 to 766 (SNLPDSEGEDPSSPERETAAGSDIRS) are disordered. Q775 is a binding site for Mg(2+). Positions 939–950 (LEKETVMERKAS) are enriched in basic and acidic residues. A disordered region spans residues 939-962 (LEKETVMERKASEPSQGLPRAMSS). The ABC transmembrane type-1 2 domain occupies 1013–1307 (LSLLVFSQLL…MVRNLADMEI (295 aa)). The chain crosses the membrane as a helical span at residues 1014–1031 (SLLVFSQLLKHMVLVAID). Residues 1032-1067 (YWLAKWTDSALVLSPAARNCSLSQECDLDQSVYAMV) lie on the Extracellular side of the membrane. An N-linked (GlcNAc...) asparagine glycan is attached at N1050. A helical membrane pass occupies residues 1068–1084 (FTLLCSLGIVLCLVTSV). The Cytoplasmic portion of the chain corresponds to 1085–1143 (TVEWTGLKVAKRLHRSLLNRIILAPMRFFETTPLGSILNRFSSDCNTIDQHIPSTLECL). The helical transmembrane segment at 1144–1161 (SRSTLLCVSALTVISYVT) threads the bilayer. A topological domain (extracellular) is located at residue P1162. Residues 1163 to 1175 (VFLVALLPLAVVC) traverse the membrane as a helical segment. Over 1176–1249 (YFIQKYFRVA…FLTAANRWLE (74 aa)) the chain is Cytoplasmic. A helical membrane pass occupies residues 1250 to 1265 (VCMEYIGACVVLIAAA). The Extracellular portion of the chain corresponds to 1266–1281 (TSISNSLHRELSAGLV). Residues 1282–1297 (GLGLTYALMVSNYLNW) form a helical membrane-spanning segment. At 1298 to 1582 (MVRNLADMEI…VFASFVRADK (285 aa)) the chain is on the cytoplasmic side. The ABC transporter 2 domain occupies 1345 to 1579 (IQIQNLSVRY…KDSVFASFVR (235 aa)). Residues T1381, G1382, G1384, K1385, S1386, and S1387 each coordinate ADP. S1483 is an ATP binding site.

Belongs to the ABC transporter superfamily. ABCC family. Conjugate transporter (TC 3.A.1.208) subfamily. Forms an heterooctamer with KCNJ11; four ABCC8/SUR1 molecules interact with one KCNJ11 homotetramer.

It is found in the cell membrane. Its activity is regulated as follows. KATP channels are regulated by cytoplasmic ATP/ADP ratios; ATP inhibits the channel by closing the pore, while ADP activates the channel. Activated by phosphatidylinositol 4,5-biphosphate (PtdIns(4,5)P2). Functionally, regulator subunit of pancreatic ATP-sensitive potassium channel (KATP), playing a major role in the regulation of insulin release. In pancreatic cells, it forms KATP channels with KCNJ11; KCNJ11 forms the channel pore while ABCC8 is required for activation and regulation. This chain is ATP-binding cassette sub-family C member 8 (ABCC8), found in Cricetus cricetus (Black-bellied hamster).